The following is a 490-amino-acid chain: 2-succinylbenzoate--CoA ligase (490 aa).

The protein belongs to the ATP-dependent AMP-binding enzyme family. MenE subfamily.

It catalyses the reaction 2-succinylbenzoate + ATP + CoA = 2-succinylbenzoyl-CoA + AMP + diphosphate. The protein operates within quinol/quinone metabolism; 1,4-dihydroxy-2-naphthoate biosynthesis; 1,4-dihydroxy-2-naphthoate from chorismate: step 5/7. It functions in the pathway quinol/quinone metabolism; menaquinone biosynthesis. Its function is as follows. Converts 2-succinylbenzoate (OSB) to 2-succinylbenzoyl-CoA (OSB-CoA). The chain is 2-succinylbenzoate--CoA ligase from Geobacillus kaustophilus (strain HTA426).